The sequence spans 266 residues: Tryptophan synthase alpha chain (266 aa).

Residues Glu50 and Asp61 each act as proton acceptor in the active site.

It belongs to the TrpA family. Tetramer of two alpha and two beta chains.

It carries out the reaction (1S,2R)-1-C-(indol-3-yl)glycerol 3-phosphate + L-serine = D-glyceraldehyde 3-phosphate + L-tryptophan + H2O. The protein operates within amino-acid biosynthesis; L-tryptophan biosynthesis; L-tryptophan from chorismate: step 5/5. The alpha subunit is responsible for the aldol cleavage of indoleglycerol phosphate to indole and glyceraldehyde 3-phosphate. The sequence is that of Tryptophan synthase alpha chain from Alkaliphilus metalliredigens (strain QYMF).